Reading from the N-terminus, the 417-residue chain is Serine hydroxymethyltransferase (417 aa).

Residues leucine 117 and 121 to 123 (GHL) contribute to the (6S)-5,6,7,8-tetrahydrofolate site. Lysine 226 carries the N6-(pyridoxal phosphate)lysine modification.

The protein belongs to the SHMT family. As to quaternary structure, homodimer. It depends on pyridoxal 5'-phosphate as a cofactor.

It localises to the cytoplasm. The enzyme catalyses (6R)-5,10-methylene-5,6,7,8-tetrahydrofolate + glycine + H2O = (6S)-5,6,7,8-tetrahydrofolate + L-serine. It participates in one-carbon metabolism; tetrahydrofolate interconversion. Its pathway is amino-acid biosynthesis; glycine biosynthesis; glycine from L-serine: step 1/1. Its function is as follows. Catalyzes the reversible interconversion of serine and glycine with tetrahydrofolate (THF) serving as the one-carbon carrier. This reaction serves as the major source of one-carbon groups required for the biosynthesis of purines, thymidylate, methionine, and other important biomolecules. Also exhibits THF-independent aldolase activity toward beta-hydroxyamino acids, producing glycine and aldehydes, via a retro-aldol mechanism. The chain is Serine hydroxymethyltransferase from Syntrophus aciditrophicus (strain SB).